Consider the following 238-residue polypeptide: Sugar fermentation stimulation protein homolog (238 aa).

Belongs to the SfsA family.

This Pseudomonas entomophila (strain L48) protein is Sugar fermentation stimulation protein homolog.